Here is an 82-residue protein sequence, read N- to C-terminus: Acyl carrier protein (82 aa).

One can recognise a Carrier domain in the interval 4–79; it reads EKIFQELKNI…DVVDIIESNL (76 aa). O-(pantetheine 4'-phosphoryl)serine is present on S39.

This sequence belongs to the acyl carrier protein (ACP) family. In terms of processing, 4'-phosphopantetheine is transferred from CoA to a specific serine of apo-ACP by AcpS. This modification is essential for activity because fatty acids are bound in thioester linkage to the sulfhydryl of the prosthetic group.

It localises to the cytoplasm. It participates in lipid metabolism; fatty acid biosynthesis. Carrier of the growing fatty acid chain in fatty acid biosynthesis. The sequence is that of Acyl carrier protein from Coprothermobacter proteolyticus (strain ATCC 35245 / DSM 5265 / OCM 4 / BT).